The primary structure comprises 251 residues: Phosphate import ATP-binding protein PstB (251 aa).

The region spanning 5-246 (IKIRGVNFFY…PKDKRTEDYI (242 aa)) is the ABC transporter domain. Position 37–44 (37–44 (GPSGCGKS)) interacts with ATP.

This sequence belongs to the ABC transporter superfamily. Phosphate importer (TC 3.A.1.7) family. The complex is composed of two ATP-binding proteins (PstB), two transmembrane proteins (PstC and PstA) and a solute-binding protein (PstS).

The protein localises to the cell membrane. It catalyses the reaction phosphate(out) + ATP + H2O = ADP + 2 phosphate(in) + H(+). In terms of biological role, part of the ABC transporter complex PstSACB involved in phosphate import. Responsible for energy coupling to the transport system. This chain is Phosphate import ATP-binding protein PstB, found in Dehalococcoides mccartyi (strain ATCC BAA-2266 / KCTC 15142 / 195) (Dehalococcoides ethenogenes (strain 195)).